The sequence spans 303 residues: Taste receptor type 2 member 13 (303 aa).

Residues M1–S7 lie on the Extracellular side of the membrane. Residues I8–V28 traverse the membrane as a helical segment. Over L29–R55 the chain is Cytoplasmic. Residues I56–F76 form a helical membrane-spanning segment. Residues V77–M85 are Extracellular-facing. A helical transmembrane segment spans residues I86–F106. The Cytoplasmic portion of the chain corresponds to Y107–K128. The helical transmembrane segment at V129–N149 threads the bilayer. Topologically, residues M150–T184 are extracellular. 2 N-linked (GlcNAc...) asparagine glycosylation sites follow: N162 and N166. A helical membrane pass occupies residues M185–L205. Residues Q206–K232 are Cytoplasmic-facing. Residues I233–I253 form a helical membrane-spanning segment. Residues S254 to V261 are Extracellular-facing. The helical transmembrane segment at I262–I282 threads the bilayer. The Cytoplasmic segment spans residues L283–R303.

The protein belongs to the G-protein coupled receptor T2R family.

It localises to the membrane. In terms of biological role, receptor that may play a role in the perception of bitterness and is gustducin-linked. May play a role in sensing the chemical composition of the gastrointestinal content. The activity of this receptor may stimulate alpha gustducin, mediate PLC-beta-2 activation and lead to the gating of TRPM5. The polypeptide is Taste receptor type 2 member 13 (TAS2R13) (Pan troglodytes (Chimpanzee)).